The primary structure comprises 193 residues: Dual-action ribosomal maturation protein DarP (193 aa).

Residues 1 to 10 (MRGRDEDTGE) are compositionally biased toward basic and acidic residues. Disordered stretches follow at residues 1-20 (MRGR…SQQR) and 170-193 (SQKP…ENDE). Positions 181–193 (GLEDEESASENDE) are enriched in acidic residues.

Belongs to the DarP family.

It localises to the cytoplasm. Its function is as follows. Member of a network of 50S ribosomal subunit biogenesis factors which assembles along the 30S-50S interface, preventing incorrect 23S rRNA structures from forming. Promotes peptidyl transferase center (PTC) maturation. The polypeptide is Dual-action ribosomal maturation protein DarP (Xanthomonas campestris pv. campestris (strain 8004)).